Consider the following 308-residue polypeptide: HTH-type transcriptional regulator SsuR (308 aa).

The 59-residue stretch at 1–59 (MNFQQLRFVREAVRQNMNLTEVANVLYTSQSGVSKQIKDLEDELGVDIFIRRGKRLTGL) folds into the HTH lysR-type domain. The segment at residues 19–38 (LTEVANVLYTSQSGVSKQIK) is a DNA-binding region (H-T-H motif).

The protein belongs to the LysR transcriptional regulatory family.

In terms of biological role, transcriptional regulator that is essential for the utilization of a number of organic sulfur sources of either environmental or human origin. Required for aliphatic sulfonate utilization. Binds to DNA at target promoter regions. Targets include the ssuDBC operon, the tauABC operon, three tauD-type genes and atsA. The sequence is that of HTH-type transcriptional regulator SsuR from Burkholderia cenocepacia (strain ATCC BAA-245 / DSM 16553 / LMG 16656 / NCTC 13227 / J2315 / CF5610) (Burkholderia cepacia (strain J2315)).